A 224-amino-acid polypeptide reads, in one-letter code: GrpE protein homolog 2, mitochondrial (224 aa).

The transit peptide at 1–31 directs the protein to the mitochondrion; it reads MAARSLWAVQRLQRLLASGAMSESRGWLHPF. Lysine 141 bears the N6-acetyllysine mark.

Belongs to the GrpE family. As to quaternary structure, probable component of the PAM complex at least composed of a mitochondrial HSP70 protein, GRPEL1 or GRPEL2, TIMM44, TIMM16/PAM16 and TIMM14/DNAJC19. In terms of tissue distribution, ubiquitous.

It is found in the mitochondrion matrix. Its function is as follows. Essential component of the PAM complex, a complex required for the translocation of transit peptide-containing proteins from the inner membrane into the mitochondrial matrix in an ATP-dependent manner. Seems to control the nucleotide-dependent binding of mitochondrial HSP70 to substrate proteins. Stimulates ATPase activity of mt-HSP70. May also serve to modulate the interconversion of oligomeric (inactive) and monomeric (active) forms of mt-HSP70. The sequence is that of GrpE protein homolog 2, mitochondrial (Grpel2) from Mus musculus (Mouse).